A 583-amino-acid polypeptide reads, in one-letter code: Lamin-B3 (583 aa).

The interval Met-1–Glu-30 is disordered. The tract at residues Ala-2 to Glu-32 is head. The segment covering Ala-15 to Ser-26 has biased composition (polar residues). Ser-21 bears the Phosphoserine mark. The IF rod domain occupies Glu-30 to Leu-386. The tract at residues Asp-33–Glu-67 is coil 1A. The segment at Val-68–Leu-79 is linker 1. The coil 1B stretch occupies residues Tyr-80 to Lys-215. The tract at residues Glu-216–Glu-242 is linker 2. The segment at Ala-243–Gln-384 is coil 2. The disordered stretch occupies residues Glu-383–Val-431. The tract at residues Arg-385–Cys-580 is tail. Residues Pro-390 to Arg-408 show a composition bias toward polar residues. Residue Ser-391 is modified to Phosphoserine. The region spanning Tyr-429–Arg-546 is the LTD domain. Cys-580 carries the cysteine methyl ester modification. A lipid anchor (S-farnesyl cysteine) is attached at Cys-580. The propeptide at Ser-581–Met-583 is removed in mature form.

The protein belongs to the intermediate filament family. Post-translationally, phosphorylation plays a key role in lamin organization, subcellular localization and nuclear envelope disintegration. Phosphorylation by CDK1 at Ser-21 at the onset of mitosis drives lamin disassembly and nuclear envelope breakdown.

It localises to the nucleus lamina. The protein localises to the nucleus envelope. It is found in the nucleus. Its subcellular location is the nucleoplasm. The protein resides in the nucleus matrix. Lamins are intermediate filament proteins that assemble into a filamentous meshwork, and which constitute the major components of the nuclear lamina, a fibrous layer on the nucleoplasmic side of the inner nuclear membrane. Lamins provide a framework for the nuclear envelope, bridging the nuclear envelope and chromatin, thereby playing an important role in nuclear assembly, chromatin organization, nuclear membrane and telomere dynamics. The structural integrity of the lamina is strictly controlled by the cell cycle, as seen by the disintegration and formation of the nuclear envelope in prophase and telophase, respectively. The chain is Lamin-B3 (lmnb3.L) from Xenopus laevis (African clawed frog).